Reading from the N-terminus, the 568-residue chain is MARVEL domain-containing protein 2 (568 aa).

Disordered stretches follow at residues 1-72 and 116-163; these read MSGG…YPSD and SGGV…SYNS. Residues 1–211 lie on the Cytoplasmic side of the membrane; that stretch reads MSGGGSSSGP…YMKSWAGLLR (211 aa). A compositionally biased stretch (basic and acidic residues) spans 29–46; the sequence is ADPRHPETNLETLHDRDL. Over residues 52-62 the composition is skewed to pro residues; sequence PLPPPPLPLHP. Residues 205–379 enclose the MARVEL domain; the sequence is SWAGLLRILC…SAMVSLKLWR (175 aa). A helical transmembrane segment spans residues 212-232; it reads ILCIVELLLGAAVFACVTAYI. Topologically, residues 233 to 266 are extracellular; it reads HKDNEWYNMFGYSQPYGYTASMQGGYYYSGPKTP. The helical transmembrane segment at 267-287 threads the bilayer; it reads FVLVVAGLAWIVTIILLVLGM. The Cytoplasmic portion of the chain corresponds to 288–303; the sequence is SMYYRTILLDSTWWPL. A helical transmembrane segment spans residues 304–324; it reads TEFGINISLFILYMAGAIVYV. The Extracellular portion of the chain corresponds to 325-354; the sequence is NDTNRGGLCYYQLFNTPVNASFCRVEGGQT. Residues 355 to 375 form a helical membrane-spanning segment; sequence AAIIFLFVSMLMYFISAMVSL. The Cytoplasmic segment spans residues 376 to 568; the sequence is KLWRHESARK…KVMDWNDGYN (193 aa). In terms of domain architecture, OCEL spans 451–562; that stretch reads PDYVAKYQAI…RIQEYDKVMD (112 aa). Residues 462–559 are a coiled coil; that stretch reads AEDERERYKA…IKQRIQEYDK (98 aa).

Belongs to the ELL/occludin family.

It is found in the cell membrane. The protein resides in the cell junction. Its subcellular location is the tight junction. In terms of biological role, may play a role in the formation of the epithelial barrier. The sequence is that of MARVEL domain-containing protein 2 (marveld2) from Xenopus tropicalis (Western clawed frog).